Here is a 171-residue protein sequence, read N- to C-terminus: O-acetyl-ADP-ribose deacetylase 2 (171 aa).

The Macro domain occupies 1 to 171; it reads MNKITVIQGD…NYDLYLKLLN (171 aa). Residues 10–11, N24, 32–34, and 121–125 contribute to the substrate site; these read DI, GVD, and STGIY. The active-site Proton acceptor is D34.

This sequence belongs to the MacroD-type family. YmdB subfamily. As to quaternary structure, homodimer. Interacts with RNase III.

It catalyses the reaction 3''-O-acetyl-ADP-D-ribose + H2O = ADP-D-ribose + acetate + H(+). It carries out the reaction 2''-O-acetyl-ADP-D-ribose + H2O = ADP-D-ribose + acetate + H(+). Its function is as follows. Deacetylates O-acetyl-ADP ribose to yield ADP-ribose and free acetate. Down-regulates ribonuclease 3 (RNase III) activity. Acts by interacting directly with the region of the ribonuclease that is required for dimerization/activation. This is O-acetyl-ADP-ribose deacetylase 2 from Pantoea vagans (strain C9-1) (Pantoea agglomerans (strain C9-1)).